A 184-amino-acid chain; its full sequence is Mediator of RNA polymerase II transcription subunit 28 (184 aa).

The stretch at 77–105 (LLKEENFDLKQEIARKDELIRKHYEKIES) forms a coiled coil.

The protein belongs to the Mediator complex subunit 28 family. In terms of assembly, component of the Mediator complex.

The protein localises to the nucleus. In terms of biological role, component of the Mediator complex, a coactivator involved in the regulated transcription of nearly all RNA polymerase II-dependent genes. Mediator functions as a bridge to convey information from gene-specific regulatory proteins to the basal RNA polymerase II transcription machinery. Mediator is recruited to promoters by direct interactions with regulatory proteins and serves as a scaffold for the assembly of a functional preinitiation complex with RNA polymerase II and the general transcription factors. This chain is Mediator of RNA polymerase II transcription subunit 28 (MED28), found in Aedes aegypti (Yellowfever mosquito).